The primary structure comprises 391 residues: UPF0229 protein BCG9842_B4751 (391 aa).

Over residues 1 to 16 the composition is skewed to polar residues; that stretch reads MGEENQPNYTISQENW. Disordered stretches follow at residues 1 to 31 and 80 to 117; these read MGEE…RHQE and HVGQ…GDAA. The span at 21-31 shows a compositional bias: basic and acidic residues; that stretch reads KGYDDQQRHQE. The segment covering 98 to 115 has biased composition (gly residues); sequence GSGGQKQKGPGKGQGAGD.

It belongs to the UPF0229 family.

This chain is UPF0229 protein BCG9842_B4751, found in Bacillus cereus (strain G9842).